The chain runs to 62 residues: SPbeta prophage-derived uncharacterized protein YonU (62 aa).

Positions 1–32 (MEKKFLDAIQQLTKELEMLKKDIDSIKEATVR) form a coiled coil.

This is SPbeta prophage-derived uncharacterized protein YonU (yonU) from Bacillus subtilis (strain 168).